Reading from the N-terminus, the 371-residue chain is GDP-perosamine synthase (371 aa).

Residue Lys186 is modified to N6-(pyridoxal phosphate)lysine.

It belongs to the DegT/DnrJ/EryC1 family. As to quaternary structure, homodimer. Pyridoxal 5'-phosphate serves as cofactor.

The catalysed reaction is GDP-alpha-D-perosamine + 2-oxoglutarate = GDP-4-dehydro-alpha-D-rhamnose + L-glutamate. It participates in bacterial outer membrane biogenesis; LPS O-antigen biosynthesis. Its function is as follows. Catalyzes the synthesis of GDP-perosamine from GDP-4-keto-6-deoxy-D-mannose and L-glutamate. Can use only L-glutamate as amino donor. In vitro, can also use GDP-4-keto-3,6-dideoxymannose to produce GDP-3-deoxyperosamine. Involved in the formation of S-LPS, which is required for attachment of the protein S-layer to the outer membrane surface. The chain is GDP-perosamine synthase from Caulobacter vibrioides (strain ATCC 19089 / CIP 103742 / CB 15) (Caulobacter crescentus).